The primary structure comprises 146 residues: Protein LDOC1 (146 aa).

This sequence belongs to the LDOC1 family. As to quaternary structure, interacts with NOD2. Ubiquitously expressed with high levels in brain ant thyroid and low expression in placenta, liver and leukocytes. Expressed as well in six of the seven human breast cancer cell lines examined.

The protein resides in the nucleus. In terms of biological role, may have an important role in the development and/or progression of some cancers. The polypeptide is Protein LDOC1 (LDOC1) (Homo sapiens (Human)).